Here is a 115-residue protein sequence, read N- to C-terminus: NADH-ubiquinone oxidoreductase chain 3 (115 aa).

The next 3 membrane-spanning stretches (helical) occupy residues 5–25, 55–75, and 86–106; these read TALLVNITLSMLLIIVAFWFF, FFLVAITFLLFDLEIALLLPL, and IMMLTAFILISVLALGLAYEW.

This sequence belongs to the complex I subunit 3 family. Core subunit of respiratory chain NADH dehydrogenase (Complex I) which is composed of 45 different subunits. Interacts with TMEM186. Interacts with TMEM242.

It is found in the mitochondrion inner membrane. It catalyses the reaction a ubiquinone + NADH + 5 H(+)(in) = a ubiquinol + NAD(+) + 4 H(+)(out). In terms of biological role, core subunit of the mitochondrial membrane respiratory chain NADH dehydrogenase (Complex I) which catalyzes electron transfer from NADH through the respiratory chain, using ubiquinone as an electron acceptor. Essential for the catalytic activity of complex I. The polypeptide is NADH-ubiquinone oxidoreductase chain 3 (Peromyscus sejugis (Santa Cruz mouse)).